The primary structure comprises 330 residues: Aspartate--ammonia ligase (330 aa).

This sequence belongs to the class-II aminoacyl-tRNA synthetase family. AsnA subfamily.

It is found in the cytoplasm. The enzyme catalyses L-aspartate + NH4(+) + ATP = L-asparagine + AMP + diphosphate + H(+). It participates in amino-acid biosynthesis; L-asparagine biosynthesis; L-asparagine from L-aspartate (ammonia route): step 1/1. This chain is Aspartate--ammonia ligase, found in Mannheimia succiniciproducens (strain KCTC 0769BP / MBEL55E).